The following is a 158-amino-acid chain: Transcription elongation factor GreA (158 aa).

The protein belongs to the GreA/GreB family.

Necessary for efficient RNA polymerase transcription elongation past template-encoded arresting sites. The arresting sites in DNA have the property of trapping a certain fraction of elongating RNA polymerases that pass through, resulting in locked ternary complexes. Cleavage of the nascent transcript by cleavage factors such as GreA or GreB allows the resumption of elongation from the new 3'terminus. GreA releases sequences of 2 to 3 nucleotides. The chain is Transcription elongation factor GreA from Polaromonas naphthalenivorans (strain CJ2).